The following is a 290-amino-acid chain: Putative transport permease ycf38 (290 aa).

7 helical membrane-spanning segments follow: residues 21-41, 46-66, 86-106, 133-153, 167-187, 194-213, and 261-281; these read VTSFFFIQELFVLVKRLFIQL, ITLISGILQPLLWLILFGALF, PGILVFTAFAGSLNSSLPLIF, FFISVLSFIQVFFIMLFGVFL, FFFLFLLIIGITTFSILLALL, LIAVIFVLNLPLLFSSTALA, and INIGQSLIILIIFDLVGFLLF. The 239-residue stretch at 46 to 284 folds into the ABC transmembrane type-2 domain; sequence ITLISGILQP…LVGFLLFKKI (239 aa).

The protein belongs to the ABC-2 integral membrane protein family.

The protein localises to the plastid. It localises to the cyanelle membrane. The polypeptide is Putative transport permease ycf38 (ycf38) (Cyanophora paradoxa).